The primary structure comprises 324 residues: Lipid droplet-associated hydrolase (324 aa).

Catalysis depends on serine 136, which acts as the Nucleophile. Active-site charge relay system residues include aspartate 270 and histidine 299.

It belongs to the AB hydrolase superfamily. LDAH family.

The protein localises to the lipid droplet. It localises to the endoplasmic reticulum. It catalyses the reaction a cholesterol ester + H2O = cholesterol + a fatty acid + H(+). Probable serine lipid hydrolase associated with lipid droplets. Has low cholesterol esterase activity. Appears to lack triglyceride lipase activity. Involved in cholesterol and triglyceride homeostasis; stimulates cellular triglyceride accumulation and cellular cholesterol release. This chain is Lipid droplet-associated hydrolase, found in Gallus gallus (Chicken).